Here is a 513-residue protein sequence, read N- to C-terminus: Zinc finger protein 395 (513 aa).

The segment covering 17 to 29 (ARVLGPSASEGPS) has biased composition (low complexity). The segment at 17–56 (ARVLGPSASEGPSAAPPSEPLLEGAAPQPFTTSDDTPCQE) is disordered. Residues 45 to 55 (PFTTSDDTPCQ) show a composition bias toward polar residues. A Nuclear export signal motif is present at residues 165–174 (MDEMMAAMVL). The disordered stretch occupies residues 204-269 (KESGDISDSG…DPFLLDEPAP (66 aa)). Residues 209–229 (ISDSGSSTTSGHWSGSSGVST) are compositionally biased toward low complexity. Phosphoserine is present on serine 248. The C2H2-type zinc-finger motif lies at 280–305 (YKCLWPNCGKVLRSIVGIKRHVKALH). The disordered stretch occupies residues 335 to 394 (AAAAAAAGTPVPGTPTSEPAPTPSMTGLPLSALPPPLHKAQSSGPEHPGPESSLPSGALS). The segment covering 348-359 (TPTSEPAPTPSM) has biased composition (polar residues). Residues serine 376 and serine 449 each carry the phosphoserine modification. Positions 376–391 (SSGPEHPGPESSLPSG) are enriched in low complexity.

Interacts with repression-mediating E2 binding site P2 of human papillomavirus type 8 (HPV8). In terms of tissue distribution, widely expressed.

The protein resides in the cytoplasm. It localises to the nucleus. Plays a role in papillomavirus genes transcription. The protein is Zinc finger protein 395 (ZNF395) of Homo sapiens (Human).